Here is a 215-residue protein sequence, read N- to C-terminus: Cytochrome b6 (215 aa).

A helical transmembrane segment spans residues 32 to 52 (IFYCLGGIVFVSFLIQVATGF). Cysteine 35 contributes to the heme c binding site. 2 residues coordinate heme b: histidine 86 and histidine 100. Transmembrane regions (helical) follow at residues 90-110 (VSMM…TGGF), 116-136 (LTWV…VTGY), and 186-206 (LHTF…FLMI). Residues histidine 187 and histidine 202 each contribute to the heme b site.

It belongs to the cytochrome b family. PetB subfamily. As to quaternary structure, the 4 large subunits of the cytochrome b6-f complex are cytochrome b6, subunit IV (17 kDa polypeptide, PetD), cytochrome f and the Rieske protein, while the 4 small subunits are PetG, PetL, PetM and PetN. The complex functions as a dimer. The cofactor is heme b. Requires heme c as cofactor.

Its subcellular location is the plastid. It localises to the chloroplast thylakoid membrane. In terms of biological role, component of the cytochrome b6-f complex, which mediates electron transfer between photosystem II (PSII) and photosystem I (PSI), cyclic electron flow around PSI, and state transitions. The sequence is that of Cytochrome b6 from Pyropia yezoensis (Susabi-nori).